The following is a 312-amino-acid chain: Taste receptor type 2 member 7 (312 aa).

Residues 1–9 (MTYETDTTL) are Extracellular-facing. A helical transmembrane segment spans residues 10-30 (MLVAVGEALVGILGNAFIALV). At 31 to 49 (NFMGWMKNRKIASIDLILS) the chain is on the cytoplasmic side. The chain crosses the membrane as a helical span at residues 50–70 (SVAMSRICLQCIILLDCIILV). The Extracellular portion of the chain corresponds to 71–101 (QYPDTYNRGKEMRTVDFFWTLTNHLSVWFAT). Residues 102–122 (CLSIFYLFKIANFFHPLFLWI) traverse the membrane as a helical segment. At 123 to 128 (KWRIDK) the chain is on the cytoplasmic side. Residues 129–149 (LILRTLLACVIISLCFSLPVT) form a helical membrane-spanning segment. Residues 150–187 (ENLSDDFRRCVKTKERINSTLRCKVNKAGHASVKVNLN) lie on the Extracellular side of the membrane. Asn-151 and Asn-167 each carry an N-linked (GlcNAc...) asparagine glycan. The helical transmembrane segment at 188–208 (LVMLFPFSVSLVSFLLLILSL) threads the bilayer. Over 209–235 (WRHTRQIQLSVTGYKDPSTTAHVKAMK) the chain is Cytoplasmic. A helical transmembrane segment spans residues 236-256 (AVISFLALFVVYCLAFLIATS). The Extracellular segment spans residues 257–266 (SYFMPESELA). A helical membrane pass occupies residues 267 to 287 (VIWGELIALIYPSSHSFILIL). Residues 288 to 312 (GSSKLKQASVRVLCRVKTMLKGKKY) are Cytoplasmic-facing.

Belongs to the G-protein coupled receptor T2R family. Expressed in subsets of taste receptor cells of the tongue and palate epithelium and exclusively in gustducin-positive cells. Expressed in 15% taste bud cells in circumvallate and foliate papillae but only in 2% in fungiform papillae. Expressed in gastric and duodenal tissues.

The protein localises to the membrane. Its function is as follows. Gustducin-coupled receptor implicated in the perception of bitter compounds in the oral cavity and the gastrointestinal tract. Signals through PLCB2 and the calcium-regulated cation channel TRPM5. This Mus musculus (Mouse) protein is Taste receptor type 2 member 7 (Tas2r7).